Here is a 567-residue protein sequence, read N- to C-terminus: TGF-beta receptor type-2 (567 aa).

Positions 1–23 (MGRGLLRGLWPLHIVLWTRIAST) are cleaved as a signal peptide. Over 24–166 (IPPHVPKSVN…SPDLLLVIIQ (143 aa)) the chain is Extracellular. Intrachain disulfides connect cysteine 51/cysteine 84, cysteine 54/cysteine 71, cysteine 61/cysteine 67, cysteine 77/cysteine 101, cysteine 121/cysteine 136, and cysteine 138/cysteine 143. N-linked (GlcNAc...) asparagine glycans are attached at residues asparagine 70 and asparagine 94. Residues 167–187 (VTGVSLLPPLGIAIAVIIIFY) form a helical membrane-spanning segment. Residues 188–567 (CYRVHRQQKL…PEDGSLNTTK (380 aa)) are Cytoplasmic-facing. One can recognise a Protein kinase domain in the interval 244–546 (IELDTLVGKG…RFSELEHPER (303 aa)). ATP contacts are provided by residues 250-258 (VGKGRFAEV) and lysine 277. The active-site Proton acceptor is the aspartate 379. Residues serine 409, serine 548, and serine 553 each carry the phosphoserine modification. A disordered region spans residues 545–567 (ERLSGRSCSQEKIPEDGSLNTTK).

This sequence belongs to the protein kinase superfamily. TKL Ser/Thr protein kinase family. TGFB receptor subfamily. Homodimer. Heterohexamer; TGFB1, TGFB2 and TGFB3 homodimeric ligands assemble a functional receptor composed of two TGFBR1 and TGFBR2 heterodimers to form a ligand-receptor heterohexamer. The respective affinity of TGFRB1 and TGFRB2 for the ligands may modulate the kinetics of assembly of the receptor and may explain the different biological activities of TGFB1, TGFB2 and TGFB3. Component of a complex composed of TSC22D1 (via N-terminus), TGFBR1 and TGFBR2; the interaction between TSC22D1 and TGFBR1 is inhibited by SMAD7 and promoted by TGFB1. Interacts with DAXX. Interacts with DYNLT4. Interacts with ZFYVE9; ZFYVE9 recruits SMAD2 and SMAD3 to the TGF-beta receptor. Interacts with and is activated by SCUBE3; this interaction does not affect TGFB1-binding to TGFBR2. Interacts with VPS39; this interaction is independent of the receptor kinase activity and of the presence of TGF-beta. Interacts with CLU. Requires Mg(2+) as cofactor. It depends on Mn(2+) as a cofactor. In terms of processing, phosphorylated on a Ser/Thr residue in the cytoplasmic domain. Widely expressed in adult. Expressed primarily in mesenchyme and epidermis of the midgestational fetus.

It is found in the cell membrane. Its subcellular location is the membrane raft. It catalyses the reaction L-threonyl-[receptor-protein] + ATP = O-phospho-L-threonyl-[receptor-protein] + ADP + H(+). The enzyme catalyses L-seryl-[receptor-protein] + ATP = O-phospho-L-seryl-[receptor-protein] + ADP + H(+). Its function is as follows. Transmembrane serine/threonine kinase forming with the TGF-beta type I serine/threonine kinase receptor, TGFBR1, the non-promiscuous receptor for the TGF-beta cytokines TGFB1, TGFB2 and TGFB3. Transduces the TGFB1, TGFB2 and TGFB3 signal from the cell surface to the cytoplasm and is thus regulating a plethora of physiological and pathological processes including cell cycle arrest in epithelial and hematopoietic cells, control of mesenchymal cell proliferation and differentiation, wound healing, extracellular matrix production, immunosuppression and carcinogenesis. The formation of the receptor complex composed of 2 TGFBR1 and 2 TGFBR2 molecules symmetrically bound to the cytokine dimer results in the phosphorylation and the activation of TGFRB1 by the constitutively active TGFBR2. Activated TGFBR1 phosphorylates SMAD2 which dissociates from the receptor and interacts with SMAD4. The SMAD2-SMAD4 complex is subsequently translocated to the nucleus where it modulates the transcription of the TGF-beta-regulated genes. This constitutes the canonical SMAD-dependent TGF-beta signaling cascade. Also involved in non-canonical, SMAD-independent TGF-beta signaling pathways. In terms of biological role, has transforming growth factor beta-activated receptor activity. The protein is TGF-beta receptor type-2 (Tgfbr2) of Mus musculus (Mouse).